The chain runs to 1182 residues: DNA-directed RNA polymerase subunit beta (1182 aa).

This sequence belongs to the RNA polymerase beta chain family. In terms of assembly, the RNAP catalytic core consists of 2 alpha, 1 beta, 1 beta' and 1 omega subunit. When a sigma factor is associated with the core the holoenzyme is formed, which can initiate transcription.

The enzyme catalyses RNA(n) + a ribonucleoside 5'-triphosphate = RNA(n+1) + diphosphate. In terms of biological role, DNA-dependent RNA polymerase catalyzes the transcription of DNA into RNA using the four ribonucleoside triphosphates as substrates. This chain is DNA-directed RNA polymerase subunit beta, found in Fervidobacterium nodosum (strain ATCC 35602 / DSM 5306 / Rt17-B1).